A 1152-amino-acid chain; its full sequence is DNA-directed RNA polymerase subunit beta' (1152 aa).

Zn(2+)-binding residues include C60, C62, C75, and C78. Residues D449, D451, and D453 each contribute to the Mg(2+) site. Residues C779, C853, C860, and C863 each coordinate Zn(2+).

Belongs to the RNA polymerase beta' chain family. In terms of assembly, the RNAP catalytic core consists of 2 alpha, 1 beta, 1 beta' and 1 omega subunit. When a sigma factor is associated with the core the holoenzyme is formed, which can initiate transcription. The cofactor is Mg(2+). Zn(2+) serves as cofactor.

It catalyses the reaction RNA(n) + a ribonucleoside 5'-triphosphate = RNA(n+1) + diphosphate. Its function is as follows. DNA-dependent RNA polymerase catalyzes the transcription of DNA into RNA using the four ribonucleoside triphosphates as substrates. This chain is DNA-directed RNA polymerase subunit beta', found in Carboxydothermus hydrogenoformans (strain ATCC BAA-161 / DSM 6008 / Z-2901).